Consider the following 408-residue polypeptide: 3-hydroxy-3-methylglutaryl-coenzyme A reductase (408 aa).

Residues E101 and D307 each act as charge relay system in the active site. The active-site Proton donor is H403.

It belongs to the HMG-CoA reductase family.

It carries out the reaction (R)-mevalonate + 2 NADP(+) + CoA = (3S)-3-hydroxy-3-methylglutaryl-CoA + 2 NADPH + 2 H(+). It functions in the pathway metabolic intermediate biosynthesis; (R)-mevalonate biosynthesis; (R)-mevalonate from acetyl-CoA: step 3/3. Functionally, converts HMG-CoA to mevalonate. In Pyrococcus abyssi (strain GE5 / Orsay), this protein is 3-hydroxy-3-methylglutaryl-coenzyme A reductase (hmgA).